The sequence spans 221 residues: Iron-sulfur cluster repair protein YtfE (221 aa).

The protein belongs to the RIC family. YtfE subfamily. In terms of assembly, homodimer.

The protein localises to the cytoplasm. Functionally, di-iron-containing protein involved in the repair of iron-sulfur clusters damaged by oxidative and nitrosative stress conditions. The protein is Iron-sulfur cluster repair protein YtfE of Yersinia pestis bv. Antiqua (strain Antiqua).